A 785-amino-acid chain; its full sequence is Endonuclease MutS2 (785 aa).

Residue 332 to 339 (GPNTGGKT) participates in ATP binding. A Smr domain is found at 710-785 (IDLRGLDAEE…GDGATIVELK (76 aa)).

This sequence belongs to the DNA mismatch repair MutS family. MutS2 subfamily. In terms of assembly, homodimer. Binds to stalled ribosomes, contacting rRNA.

Endonuclease that is involved in the suppression of homologous recombination and thus may have a key role in the control of bacterial genetic diversity. In terms of biological role, acts as a ribosome collision sensor, splitting the ribosome into its 2 subunits. Detects stalled/collided 70S ribosomes which it binds and splits by an ATP-hydrolysis driven conformational change. Acts upstream of the ribosome quality control system (RQC), a ribosome-associated complex that mediates the extraction of incompletely synthesized nascent chains from stalled ribosomes and their subsequent degradation. Probably generates substrates for RQC. This is Endonuclease MutS2 from Clostridium botulinum (strain Alaska E43 / Type E3).